The sequence spans 137 residues: Large ribosomal subunit protein uL16 (137 aa).

The protein belongs to the universal ribosomal protein uL16 family. In terms of assembly, part of the 50S ribosomal subunit.

In terms of biological role, binds 23S rRNA and is also seen to make contacts with the A and possibly P site tRNAs. The polypeptide is Large ribosomal subunit protein uL16 (Bradyrhizobium sp. (strain BTAi1 / ATCC BAA-1182)).